Reading from the N-terminus, the 388-residue chain is Chorismate synthase (388 aa).

Positions 39 and 45 each coordinate NADP(+). FMN contacts are provided by residues 132–134, 251–252, G296, 311–315, and R337; these read RSS, NA, and KPIPT.

In terms of assembly, homotetramer. FMNH2 serves as cofactor.

The catalysed reaction is 5-O-(1-carboxyvinyl)-3-phosphoshikimate = chorismate + phosphate. Its pathway is metabolic intermediate biosynthesis; chorismate biosynthesis; chorismate from D-erythrose 4-phosphate and phosphoenolpyruvate: step 7/7. Functionally, catalyzes the anti-1,4-elimination of the C-3 phosphate and the C-6 proR hydrogen from 5-enolpyruvylshikimate-3-phosphate (EPSP) to yield chorismate, which is the branch point compound that serves as the starting substrate for the three terminal pathways of aromatic amino acid biosynthesis. This reaction introduces a second double bond into the aromatic ring system. The sequence is that of Chorismate synthase from Staphylococcus aureus.